Here is a 1119-residue protein sequence, read N- to C-terminus: G8 domain-containing protein DDB_G0288475 (1119 aa).

The signal sequence occupies residues 1 to 22 (MKYSSFLLLFIYIFFILNNINA). A G8 domain is found at 276–404 (TIWTSGVVPL…YHNTWTKLAA (129 aa)). Residues N308, N559, N736, N854, N968, N1035, N1056, and N1070 are each glycosylated (N-linked (GlcNAc...) asparagine).

The protein belongs to the comF family.

Its subcellular location is the secreted. The chain is G8 domain-containing protein DDB_G0288475 from Dictyostelium discoideum (Social amoeba).